A 470-amino-acid chain; its full sequence is Putative multidrug resistance protein MdtD (470 aa).

Topologically, residues 1 to 11 (MTELPDNTRWQ) are periplasmic. The chain crosses the membrane as a helical span at residues 12–32 (LWIVALGFFMQSLDTTIVNTA). Residues 33–48 (LPSMAKSLGESPLHMH) are Cytoplasmic-facing. A helical membrane pass occupies residues 49–69 (MVVVSYVLTVAVMLPASGWLA). Over 70 to 76 (DKIGVRN) the chain is Periplasmic. A helical transmembrane segment spans residues 77 to 97 (IFFAAIVLFTLGSLFCALSGT). The Cytoplasmic portion of the chain corresponds to 98-101 (LNQL). A helical membrane pass occupies residues 102 to 124 (VLARVLQGVGGAMMVPVGRLTVM). At 125–137 (KIVPRAQYMAAMT) the chain is on the periplasmic side. The chain crosses the membrane as a helical span at residues 138–158 (FVTLPGQIGPLLGPALGGVLV). Residues 159–164 (EYASWH) lie on the Cytoplasmic side of the membrane. The helical transmembrane segment at 165 to 185 (WIFLINIPVGIVGAMATFMLM) threads the bilayer. The Periplasmic segment spans residues 186 to 196 (PNYTIETRRFD). Residues 197-217 (LPGFLLLAIGMAVLTLALDGS) traverse the membrane as a helical segment. The Cytoplasmic segment spans residues 218–221 (KSMG). The helical transmembrane segment at 222 to 242 (ISPWTLAGLAAGGAAAILLYL) threads the bilayer. The Periplasmic segment spans residues 243–262 (LHAKKNSGALFSLRLFCTPT). Residues 263 to 283 (FSLGLLGSFAGRIGSGMLPFM) form a helical membrane-spanning segment. Over 284 to 285 (TP) the chain is Cytoplasmic. A helical transmembrane segment spans residues 286–306 (VFLQIGLGFSPFHAGLMMIPM). The Periplasmic segment spans residues 307-341 (VLGSMGMKRIVVQIVNRFGYRRVLVATTLGLALVS). The chain crosses the membrane as a helical span at residues 342-362 (LLFMSVALLGWYYLLPLVLLL). Residues 363–395 (QGMVNSARFSSMNTLTLKDLPDTLASSGNSLLS) are Cytoplasmic-facing. The helical transmembrane segment at 396 to 416 (MIMQLSMSIGVTIAGMLLGMF) threads the bilayer. Residues 417-430 (GQQHIGIDSSATHH) are Periplasmic-facing. Residues 431 to 451 (VFMYTWLCMAVIIALPAIIFA) form a helical membrane-spanning segment. Residues 452-470 (RVPNDTQQNMVISRRKRSL) are Cytoplasmic-facing.

This sequence belongs to the major facilitator superfamily. TCR/Tet family.

It localises to the cell inner membrane. This chain is Putative multidrug resistance protein MdtD, found in Salmonella paratyphi B (strain ATCC BAA-1250 / SPB7).